A 301-amino-acid polypeptide reads, in one-letter code: uncharacterized protein (301 aa).

Positions 1–25 (MKFKNTLSIFKILIILFSFYNVAFS) are cleaved as a signal peptide. Residues 26-279 (DDTEKYTFKG…STTGSKDSST (254 aa)) are Extracellular-facing. Positions 174–281 (LYTGSSNTPN…TGSKDSSTGN (108 aa)) are disordered. N-linked (GlcNAc...) asparagine glycosylation is found at N191, N212, N234, and N241. Positions 204-234 (SSSDSTNSNSSSTDTASSSPSSSPSSSPSPN) are enriched in low complexity. Residues 254-281 (GGVETSTAGSSTGTTSSTTGSKDSSTGN) are compositionally biased toward low complexity. A helical transmembrane segment spans residues 280 to 300 (GNSILPTLIIVTFFVLTLVIM). A topological domain (cytoplasmic) is located at residue S301.

It localises to the membrane. This is an uncharacterized protein from Dictyostelium discoideum (Social amoeba).